A 113-amino-acid polypeptide reads, in one-letter code: Large ribosomal subunit protein uL22 (113 aa).

This sequence belongs to the universal ribosomal protein uL22 family. In terms of assembly, part of the 50S ribosomal subunit.

In terms of biological role, this protein binds specifically to 23S rRNA; its binding is stimulated by other ribosomal proteins, e.g. L4, L17, and L20. It is important during the early stages of 50S assembly. It makes multiple contacts with different domains of the 23S rRNA in the assembled 50S subunit and ribosome. Its function is as follows. The globular domain of the protein is located near the polypeptide exit tunnel on the outside of the subunit, while an extended beta-hairpin is found that lines the wall of the exit tunnel in the center of the 70S ribosome. The protein is Large ribosomal subunit protein uL22 of Natranaerobius thermophilus (strain ATCC BAA-1301 / DSM 18059 / JW/NM-WN-LF).